The sequence spans 284 residues: MCCIAGAPSLSGRERAEKEGIRFKENKGELKIGIINLMPFKEEVEYQFYAVLGRFDISVEVEFLYPENHVFKNTDGSYIKDNYYPLGELNNRNYDAIIMTGAPVELLDFQKVNYWDEIKNLIKSNKLPALYICWGAQAALYVKYGIEKFTLNEKLLGIFRHRTNKNPFVSGEFWAPHSRNTQNSSKDIKNAGLRILAESDEAGVYMASDRDYREFYISGHGEYQRERLKYEYSRDQNLFPKNYFPEDDPKKEPPMKWDSHRKEFYYKWLSHIREKKFSNISDKR.

The active-site Acyl-thioester intermediate is the cysteine 133. 2 residues coordinate substrate: lysine 154 and serine 178. Histidine 220 serves as the catalytic Proton acceptor. Glutamate 222 is a catalytic residue. A substrate-binding site is contributed by arginine 234.

The protein belongs to the MetA family.

The protein localises to the cytoplasm. The catalysed reaction is L-homoserine + acetyl-CoA = O-acetyl-L-homoserine + CoA. It participates in amino-acid biosynthesis; L-methionine biosynthesis via de novo pathway; O-acetyl-L-homoserine from L-homoserine: step 1/1. Transfers an acetyl group from acetyl-CoA to L-homoserine, forming acetyl-L-homoserine. This chain is Homoserine O-acetyltransferase 2, found in Ilyobacter polytropus (strain ATCC 51220 / DSM 2926 / LMG 16218 / CuHBu1).